The primary structure comprises 339 residues: Cyclin-Y-like protein 1-A (339 aa).

The span at 1 to 13 shows a compositional bias: polar residues; it reads MGNTVTCCVSPDS. A disordered region spans residues 1–42; sequence MGNTVTCCVSPDSSPKEGRDREVTESGEPYQAQGEPQDGDVQ. Positions 14–24 are enriched in basic and acidic residues; sequence SPKEGRDREVT. One can recognise a Cyclin N-terminal domain in the interval 141–263; that stretch reads DIFDEKLHPI…FLELLQFNIN (123 aa).

The protein belongs to the cyclin family. Cyclin Y subfamily.

This Xenopus laevis (African clawed frog) protein is Cyclin-Y-like protein 1-A (ccnyl1-a).